Consider the following 190-residue polypeptide: Dirigent protein 15 (190 aa).

Positions 1 to 19 (MKSTLIIFFTLCLSMAVMA) are cleaved as a signal peptide. Asn63 and Asn128 each carry an N-linked (GlcNAc...) asparagine glycan.

Belongs to the plant dirigent protein family. In terms of assembly, homodimer.

It localises to the secreted. It is found in the extracellular space. The protein localises to the apoplast. Its function is as follows. Dirigent proteins impart stereoselectivity on the phenoxy radical-coupling reaction, yielding optically active lignans from two molecules of coniferyl alcohol in the biosynthesis of lignans, flavonolignans, and alkaloids and thus plays a central role in plant secondary metabolism. The sequence is that of Dirigent protein 15 (DIR15) from Arabidopsis thaliana (Mouse-ear cress).